Here is a 245-residue protein sequence, read N- to C-terminus: tRNA pseudouridine synthase A (245 aa).

Aspartate 52 acts as the Nucleophile in catalysis. Tyrosine 111 contributes to the substrate binding site.

It belongs to the tRNA pseudouridine synthase TruA family. Homodimer.

It catalyses the reaction uridine(38/39/40) in tRNA = pseudouridine(38/39/40) in tRNA. In terms of biological role, formation of pseudouridine at positions 38, 39 and 40 in the anticodon stem and loop of transfer RNAs. In Rhodopseudomonas palustris (strain HaA2), this protein is tRNA pseudouridine synthase A.